The following is a 58-amino-acid chain: UPF0391 membrane protein Sbal_1421 (58 aa).

A run of 2 helical transmembrane segments spans residues 6–26 (LVFL…IAGA) and 28–48 (AGIA…SLLV).

This sequence belongs to the UPF0391 family.

It localises to the cell membrane. In Shewanella baltica (strain OS155 / ATCC BAA-1091), this protein is UPF0391 membrane protein Sbal_1421.